The primary structure comprises 1383 residues: DNA-directed RNA polymerase subunit beta (1383 aa).

Belongs to the RNA polymerase beta chain family. In terms of assembly, the RNAP catalytic core consists of 2 alpha, 1 beta, 1 beta' and 1 omega subunit. When a sigma factor is associated with the core the holoenzyme is formed, which can initiate transcription.

The enzyme catalyses RNA(n) + a ribonucleoside 5'-triphosphate = RNA(n+1) + diphosphate. In terms of biological role, DNA-dependent RNA polymerase catalyzes the transcription of DNA into RNA using the four ribonucleoside triphosphates as substrates. The chain is DNA-directed RNA polymerase subunit beta from Anaplasma phagocytophilum (strain HZ).